A 486-amino-acid chain; its full sequence is Putative ankyrin repeat protein R634 (486 aa).

12 ANK repeats span residues 84–113 (DLFKYVIEFCISGKLDSIKRLVSMGANVRE), 114–143 (HNDVALNRAVENGHMDIFEYLISKGADLYA), 145–173 (KNTLVRCASYGGNLDMVKYLISIGANFRE), 174–203 (NCDTPLIWACHNGHLEIVKYLVDQGADVNS), 205–233 (SHKSIITASKMGHLGIVKYLVSKTTNIDW), 234–263 (RHNYAAAFAAQNNHLEIVKYLVNEGANLEI), 265–293 (DGCIIRVAAKNGHLDIVKYLVSLGMEIGF), 307–336 (NKITPVIGSAVEGGHLSMVKYFVSIGATIK), 337–366 (EKNYAFVKAAEYGHLEIIKYLVSQGISLEK), 367–396 (KINKALIVACSKGHLEIVKYLVENGANVKT), 398–426 (EGLPLRQACWGNYLDIAKYLVSNGADVTS), and 427–456 (YDNYALKTALEKGDLETVKYFIYVGANVND).

The protein is Putative ankyrin repeat protein R634 of Acanthamoeba polyphaga (Amoeba).